The primary structure comprises 156 residues: ATP synthase subunit b (156 aa).

A helical membrane pass occupies residues 7-27 (LIGQLIAFALFVAFCMKFVWP).

This sequence belongs to the ATPase B chain family. F-type ATPases have 2 components, F(1) - the catalytic core - and F(0) - the membrane proton channel. F(1) has five subunits: alpha(3), beta(3), gamma(1), delta(1), epsilon(1). F(0) has three main subunits: a(1), b(2) and c(10-14). The alpha and beta chains form an alternating ring which encloses part of the gamma chain. F(1) is attached to F(0) by a central stalk formed by the gamma and epsilon chains, while a peripheral stalk is formed by the delta and b chains.

Its subcellular location is the cell inner membrane. In terms of biological role, f(1)F(0) ATP synthase produces ATP from ADP in the presence of a proton or sodium gradient. F-type ATPases consist of two structural domains, F(1) containing the extramembraneous catalytic core and F(0) containing the membrane proton channel, linked together by a central stalk and a peripheral stalk. During catalysis, ATP synthesis in the catalytic domain of F(1) is coupled via a rotary mechanism of the central stalk subunits to proton translocation. Its function is as follows. Component of the F(0) channel, it forms part of the peripheral stalk, linking F(1) to F(0). The polypeptide is ATP synthase subunit b (Actinobacillus pleuropneumoniae serotype 7 (strain AP76)).